A 165-amino-acid chain; its full sequence is Endoribonuclease YbeY (165 aa).

Zn(2+)-binding residues include His119, His123, and His129.

The protein belongs to the endoribonuclease YbeY family. Zn(2+) serves as cofactor.

The protein resides in the cytoplasm. Single strand-specific metallo-endoribonuclease involved in late-stage 70S ribosome quality control and in maturation of the 3' terminus of the 16S rRNA. The chain is Endoribonuclease YbeY from Streptomyces griseus subsp. griseus (strain JCM 4626 / CBS 651.72 / NBRC 13350 / KCC S-0626 / ISP 5235).